The sequence spans 525 residues: Apolipoprotein N-acyltransferase 2 (525 aa).

The next 6 helical transmembrane spans lie at 25-45 (ILNFGSAIAGFSGLVLVYYAL), 56-76 (FLYGFFVSFVHLMSSFWLAFF), 81-101 (IFTLGASTLAYFFIAMPFGFL), 115-135 (FFFAAIWLLWEFAKSTGFLAY), 153-173 (FVDITGVWGLSFIVPLIAACL), and 200-220 (LIFTAFLVLIINIYGITILSI). In terms of domain architecture, CN hydrolase spans 228–486 (LNTVIVQQNT…AESVYTEVPV (259 aa)). The active-site Proton acceptor is the Glu-274. Residue Lys-339 is part of the active site. The active-site Nucleophile is Cys-397. Residues 495 to 515 (ASYKDWLPIMMFLILIFNIFL) form a helical membrane-spanning segment.

The protein belongs to the CN hydrolase family. Apolipoprotein N-acyltransferase subfamily.

It localises to the cell inner membrane. It catalyses the reaction N-terminal S-1,2-diacyl-sn-glyceryl-L-cysteinyl-[lipoprotein] + a glycerophospholipid = N-acyl-S-1,2-diacyl-sn-glyceryl-L-cysteinyl-[lipoprotein] + a 2-acyl-sn-glycero-3-phospholipid + H(+). It functions in the pathway protein modification; lipoprotein biosynthesis (N-acyl transfer). Catalyzes the phospholipid dependent N-acylation of the N-terminal cysteine of apolipoprotein, the last step in lipoprotein maturation. The polypeptide is Apolipoprotein N-acyltransferase 2 (Treponema denticola (strain ATCC 35405 / DSM 14222 / CIP 103919 / JCM 8153 / KCTC 15104)).